Here is a 256-residue protein sequence, read N- to C-terminus: ATP synthase peripheral stalk subunit b, mitochondrial (256 aa).

The N-terminal 42 residues, 1–42, are a transit peptide targeting the mitochondrion; the sequence is MLSRVVLSAAATAAPSLKNAAFLGPGVLQATRTFHTGQPHLV. Lys131 carries the post-translational modification N6-succinyllysine. 6 positions are modified to N6-acetyllysine: Lys139, Lys154, Lys162, Lys221, Lys233, and Lys244.

Belongs to the eukaryotic ATPase B chain family. In terms of assembly, component of the ATP synthase complex composed at least of ATP5F1A/subunit alpha, ATP5F1B/subunit beta, ATP5MC1/subunit c (homooctomer), MT-ATP6/subunit a, MT-ATP8/subunit 8, ATP5ME/subunit e, ATP5MF/subunit f, ATP5MG/subunit g, ATP5MK/subunit k, ATP5MJ/subunit j, ATP5F1C/subunit gamma, ATP5F1D/subunit delta, ATP5F1E/subunit epsilon, ATP5PF/subunit F6, ATP5PB/subunit b, ATP5PD/subunit d, ATP5PO/subunit OSCP. ATP synthase complex consists of a soluble F(1) head domain (subunits alpha(3) and beta(3)) - the catalytic core - and a membrane F(0) domain - the membrane proton channel (subunits c, a, 8, e, f, g, k and j). These two domains are linked by a central stalk (subunits gamma, delta, and epsilon) rotating inside the F1 region and a stationary peripheral stalk (subunits F6, b, d, and OSCP).

It localises to the mitochondrion. It is found in the mitochondrion inner membrane. Functionally, subunit b, of the mitochondrial membrane ATP synthase complex (F(1)F(0) ATP synthase or Complex V) that produces ATP from ADP in the presence of a proton gradient across the membrane which is generated by electron transport complexes of the respiratory chain. ATP synthase complex consist of a soluble F(1) head domain - the catalytic core - and a membrane F(1) domain - the membrane proton channel. These two domains are linked by a central stalk rotating inside the F(1) region and a stationary peripheral stalk. During catalysis, ATP synthesis in the catalytic domain of F(1) is coupled via a rotary mechanism of the central stalk subunits to proton translocation. In vivo, can only synthesize ATP although its ATP hydrolase activity can be activated artificially in vitro. Part of the complex F(0) domain. Part of the complex F(0) domain and the peripheric stalk, which acts as a stator to hold the catalytic alpha(3)beta(3) subcomplex and subunit a/ATP6 static relative to the rotary elements. In Homo sapiens (Human), this protein is ATP synthase peripheral stalk subunit b, mitochondrial.